A 148-amino-acid chain; its full sequence is Ergosterol biosynthetic protein 28 (148 aa).

Residues 1–25 (MFSLQDVITTTKTTLAAMPKGYLPK) lie on the Cytoplasmic side of the membrane. A helical transmembrane segment spans residues 26 to 46 (WLLFISIVSVFNSIQTYVSGL). Topologically, residues 47–92 (ELTRKVYERKPTETTHLSARTFGTWTFISCVIRFYGAMYLNEPHIF) are lumenal. Residues 93 to 113 (ELVFMSYMVALFHFGSELLIF) traverse the membrane as a helical segment. Residues 114 to 120 (RTCKLGK) lie on the Cytoplasmic side of the membrane. A helical membrane pass occupies residues 121–136 (GFMGPLVVSTTSLVWM). Over 137-148 (YKQREYYTGVAW) the chain is Lumenal.

The protein belongs to the ERG28 family. In terms of assembly, heterotetramer of ERG25, ERG26, ERG27 and ERG28. ERG28 acts as a scaffold to tether ERG27 and other 4,4-demethylation-related enzymes, forming a demethylation enzyme complex, in the endoplasmic reticulum. Interacts with ERG25, ERG26 and ERG27. Also interacts with ERG1, ERG3, ERG5, ERG6 and ERG11.

The protein resides in the endoplasmic reticulum membrane. Part of the third module of ergosterol biosynthesis pathway that includes the late steps of the pathway. ERG28 has a role as a scaffold to help anchor the catalytic components of the C-4 demethylation complex ERG25, ERG26 and ERG27 to the endoplasmic reticulum. The third module or late pathway involves the ergosterol synthesis itself through consecutive reactions that mainly occur in the endoplasmic reticulum (ER) membrane. Firstly, the squalene synthase ERG9 catalyzes the condensation of 2 farnesyl pyrophosphate moieties to form squalene, which is the precursor of all steroids. Squalene synthase is crucial for balancing the incorporation of farnesyl diphosphate (FPP) into sterol and nonsterol isoprene synthesis. Secondly, the squalene epoxidase ERG1 catalyzes the stereospecific oxidation of squalene to (S)-2,3-epoxysqualene, which is considered to be a rate-limiting enzyme in steroid biosynthesis. Then, the lanosterol synthase ERG7 catalyzes the cyclization of (S)-2,3 oxidosqualene to lanosterol, a reaction that forms the sterol core. In the next steps, lanosterol is transformed to zymosterol through a complex process involving various demethylation, reduction and desaturation reactions. The lanosterol 14-alpha-demethylase ERG11 (also known as CYP51) catalyzes C14-demethylation of lanosterol to produce 4,4'-dimethyl cholesta-8,14,24-triene-3-beta-ol, which is critical for ergosterol biosynthesis. The C-14 reductase ERG24 reduces the C14=C15 double bond of 4,4-dimethyl-cholesta-8,14,24-trienol to produce 4,4-dimethyl-cholesta-8,24-dienol. 4,4-dimethyl-cholesta-8,24-dienol is substrate of the C-4 demethylation complex ERG25-ERG26-ERG27 in which ERG25 catalyzes the three-step monooxygenation required for the demethylation of 4,4-dimethyl and 4alpha-methylsterols, ERG26 catalyzes the oxidative decarboxylation that results in a reduction of the 3-beta-hydroxy group at the C-3 carbon to an oxo group, and ERG27 is responsible for the reduction of the keto group on the C-3. ERG28 has a role as a scaffold to help anchor ERG25, ERG26 and ERG27 to the endoplasmic reticulum and ERG29 regulates the activity of the iron-containing C4-methylsterol oxidase ERG25. Then, the sterol 24-C-methyltransferase ERG6 catalyzes the methyl transfer from S-adenosyl-methionine to the C-24 of zymosterol to form fecosterol. The C-8 sterol isomerase ERG2 catalyzes the reaction which results in unsaturation at C-7 in the B ring of sterols and thus converts fecosterol to episterol. The sterol-C5-desaturase ERG3 then catalyzes the introduction of a C-5 double bond in the B ring to produce 5-dehydroepisterol. The C-22 sterol desaturase ERG5 further converts 5-dehydroepisterol into ergosta-5,7,22,24(28)-tetraen-3beta-ol by forming the C-22(23) double bond in the sterol side chain. Finally, ergosta-5,7,22,24(28)-tetraen-3beta-ol is substrate of the C-24(28) sterol reductase ERG4 to produce ergosterol. In Saccharomyces cerevisiae (strain ATCC 204508 / S288c) (Baker's yeast), this protein is Ergosterol biosynthetic protein 28.